We begin with the raw amino-acid sequence, 56 residues long: Large ribosomal subunit protein bL32 (56 aa).

Residues Met-1 to His-37 form a disordered region. The segment covering Lys-7–Arg-16 has biased composition (basic residues). Over residues Ala-21–Ala-31 the composition is skewed to polar residues.

Belongs to the bacterial ribosomal protein bL32 family.

In Shewanella pealeana (strain ATCC 700345 / ANG-SQ1), this protein is Large ribosomal subunit protein bL32.